The following is a 337-amino-acid chain: Ferredoxin--NADP reductase (337 aa).

Aspartate 35, glutamine 43, tyrosine 48, alanine 88, phenylalanine 122, aspartate 289, and threonine 330 together coordinate FAD.

The protein belongs to the ferredoxin--NADP reductase type 2 family. Homodimer. The cofactor is FAD.

It carries out the reaction 2 reduced [2Fe-2S]-[ferredoxin] + NADP(+) + H(+) = 2 oxidized [2Fe-2S]-[ferredoxin] + NADPH. The protein is Ferredoxin--NADP reductase of Ehrlichia ruminantium (strain Welgevonden).